The primary structure comprises 621 residues: MSHVLVNVAWPYANGPRHIGHVAGFGVPSDVYARYERMKGNDVLMVSGTDEHGTPILVEAEKEGLTAQELANRYNRVIAKDLCDLGLSYDLFTRTTTGNHEHVVQEMFKQCLENGYIYKGSQQVAISPSTGRTLPDRYIEGECPICHAEGARGDQCDACGNELDPDELINPVSKINGETPRFEQTEHYFLDLPALAEANKAWLETRKGWRTNVINFSLGLFKEVKPRAITRDIDWGIPVPVKGWIDNPNKKLYVWFDAVIGYLSASIEWARRQGDPEKWREWWNDPKCPAYYFMGKDNITFHSQIWPSEMLAYNGKGSKGGETGPMGPLNLPEQVVASEFMTMEGKKFSSSRGIVIYVKDILARYPVDAVRYYISVAGPESSDSDFTWAEFVRHNNEELASSWGNLVNRVANLINKNFGEIPPLDEDSMTNEDRGLLEEASAAFDVVGSSIETHHQKHALSEAMRVVGDINKYISATEPWKIKDDQARLGTVLHVAAQAVSDANHLLAPFLPHSAQKVWEALGGTGTFSPLPELKEVEDLDKPGFTYPIITGDYELGVNVHPWKSEAIEVGAVVPKPAPIFAKIPTEAVEEELARFDEALAARRAAEAERLAAEKAKLAAE.

Residues Pro11–His21 carry the 'HIGH' region motif. The Zn(2+) site is built by Cys143, Cys146, Cys156, and Cys159. The 'KMSKS' region signature appears at Lys347 to Ser351. Ser350 contributes to the ATP binding site.

This sequence belongs to the class-I aminoacyl-tRNA synthetase family. MetG type 1 subfamily. In terms of assembly, monomer. Zn(2+) serves as cofactor.

The protein localises to the cytoplasm. It catalyses the reaction tRNA(Met) + L-methionine + ATP = L-methionyl-tRNA(Met) + AMP + diphosphate. Functionally, is required not only for elongation of protein synthesis but also for the initiation of all mRNA translation through initiator tRNA(fMet) aminoacylation. This Bifidobacterium longum subsp. infantis (strain ATCC 15697 / DSM 20088 / JCM 1222 / NCTC 11817 / S12) protein is Methionine--tRNA ligase.